We begin with the raw amino-acid sequence, 419 residues long: Probable serine/threonine-protein kinase DDB_G0290859 (419 aa).

A Protein kinase domain is found at Tyr40 to Phe387. Residues Ile46–Val54 and Lys69 contribute to the ATP site. The active-site Proton acceptor is Asp173. The AGC-kinase C-terminal domain occupies Glu388 to Asn419.

This sequence belongs to the protein kinase superfamily. AGC Ser/Thr protein kinase family.

It catalyses the reaction L-seryl-[protein] + ATP = O-phospho-L-seryl-[protein] + ADP + H(+). It carries out the reaction L-threonyl-[protein] + ATP = O-phospho-L-threonyl-[protein] + ADP + H(+). The chain is Probable serine/threonine-protein kinase DDB_G0290859 from Dictyostelium discoideum (Social amoeba).